We begin with the raw amino-acid sequence, 579 residues long: Arginine--tRNA ligase (579 aa).

Residues 136–146 carry the 'HIGH' region motif; the sequence is ANPTGPLHIGH.

This sequence belongs to the class-I aminoacyl-tRNA synthetase family. In terms of assembly, monomer.

It localises to the cytoplasm. It catalyses the reaction tRNA(Arg) + L-arginine + ATP = L-arginyl-tRNA(Arg) + AMP + diphosphate. The protein is Arginine--tRNA ligase of Anaplasma marginale (strain St. Maries).